We begin with the raw amino-acid sequence, 378 residues long: Bifunctional enzyme IspD/IspF (378 aa).

The segment at Met1 to Arg222 is 2-C-methyl-D-erythritol 4-phosphate cytidylyltransferase. Residues Arg222–Gly378 form a 2-C-methyl-D-erythritol 2,4-cyclodiphosphate synthase region. Asp228 and His230 together coordinate a divalent metal cation. 4-CDP-2-C-methyl-D-erythritol 2-phosphate-binding positions include Asp228–His230 and His254–Ser255. His262 serves as a coordination point for a divalent metal cation. Residues Asp276–Gly278, Thr352–Glu355, Phe359, and Arg362 each bind 4-CDP-2-C-methyl-D-erythritol 2-phosphate.

The protein in the N-terminal section; belongs to the IspD/TarI cytidylyltransferase family. IspD subfamily. It in the C-terminal section; belongs to the IspF family. A divalent metal cation is required as a cofactor.

The enzyme catalyses 2-C-methyl-D-erythritol 4-phosphate + CTP + H(+) = 4-CDP-2-C-methyl-D-erythritol + diphosphate. It carries out the reaction 4-CDP-2-C-methyl-D-erythritol 2-phosphate = 2-C-methyl-D-erythritol 2,4-cyclic diphosphate + CMP. The protein operates within isoprenoid biosynthesis; isopentenyl diphosphate biosynthesis via DXP pathway; isopentenyl diphosphate from 1-deoxy-D-xylulose 5-phosphate: step 2/6. Its pathway is isoprenoid biosynthesis; isopentenyl diphosphate biosynthesis via DXP pathway; isopentenyl diphosphate from 1-deoxy-D-xylulose 5-phosphate: step 4/6. In terms of biological role, bifunctional enzyme that catalyzes the formation of 4-diphosphocytidyl-2-C-methyl-D-erythritol from CTP and 2-C-methyl-D-erythritol 4-phosphate (MEP) (IspD), and catalyzes the conversion of 4-diphosphocytidyl-2-C-methyl-D-erythritol 2-phosphate (CDP-ME2P) to 2-C-methyl-D-erythritol 2,4-cyclodiphosphate (ME-CPP) with a corresponding release of cytidine 5-monophosphate (CMP) (IspF). The protein is Bifunctional enzyme IspD/IspF of Hyphomonas neptunium (strain ATCC 15444).